A 341-amino-acid chain; its full sequence is Anthranilate phosphoribosyltransferase (341 aa).

5-phospho-alpha-D-ribose 1-diphosphate-binding positions include glycine 79, 82–83, threonine 87, 89–92, 107–115, and serine 119; these read GD, NIST, and KHGNRAVSS. An anthranilate-binding site is contributed by glycine 79. Serine 91 contacts Mg(2+). Anthranilate is bound at residue asparagine 110. Residue arginine 165 coordinates anthranilate. Mg(2+)-binding residues include aspartate 224 and glutamate 225.

This sequence belongs to the anthranilate phosphoribosyltransferase family. Homodimer. The cofactor is Mg(2+).

The catalysed reaction is N-(5-phospho-beta-D-ribosyl)anthranilate + diphosphate = 5-phospho-alpha-D-ribose 1-diphosphate + anthranilate. The protein operates within amino-acid biosynthesis; L-tryptophan biosynthesis; L-tryptophan from chorismate: step 2/5. Catalyzes the transfer of the phosphoribosyl group of 5-phosphorylribose-1-pyrophosphate (PRPP) to anthranilate to yield N-(5'-phosphoribosyl)-anthranilate (PRA). This chain is Anthranilate phosphoribosyltransferase, found in Bacillus cereus (strain ATCC 14579 / DSM 31 / CCUG 7414 / JCM 2152 / NBRC 15305 / NCIMB 9373 / NCTC 2599 / NRRL B-3711).